The chain runs to 188 residues: Elongation factor P (188 aa).

The residue at position 34 (lysine 34) is an N6-(3,6-diaminohexanoyl)-5-hydroxylysine.

This sequence belongs to the elongation factor P family. May be beta-lysylated on the epsilon-amino group of Lys-34 by the combined action of EpmA and EpmB, and then hydroxylated on the C5 position of the same residue by EpmC (if this protein is present). Lysylation is critical for the stimulatory effect of EF-P on peptide-bond formation. The lysylation moiety may extend toward the peptidyltransferase center and stabilize the terminal 3-CCA end of the tRNA. Hydroxylation of the C5 position on Lys-34 may allow additional potential stabilizing hydrogen-bond interactions with the P-tRNA.

The protein resides in the cytoplasm. The protein operates within protein biosynthesis; polypeptide chain elongation. Its function is as follows. Involved in peptide bond synthesis. Alleviates ribosome stalling that occurs when 3 or more consecutive Pro residues or the sequence PPG is present in a protein, possibly by augmenting the peptidyl transferase activity of the ribosome. Modification of Lys-34 is required for alleviation. This chain is Elongation factor P, found in Haemophilus influenzae (strain 86-028NP).